Here is a 57-residue protein sequence, read N- to C-terminus: MAGSFHRVACGDCENEQVVFGKASSVVSCAVCGTTLATPTGGEAEFHGEIVETVEAR.

Zn(2+)-binding residues include cysteine 10, cysteine 13, cysteine 29, and cysteine 32. The segment at 10 to 32 adopts a C4-type zinc-finger fold; it reads CGDCENEQVVFGKASSVVSCAVC.

The protein belongs to the eukaryotic ribosomal protein eS27 family. As to quaternary structure, part of the 30S ribosomal subunit. The cofactor is Zn(2+).

The protein is Small ribosomal subunit protein eS27 of Halorubrum lacusprofundi (strain ATCC 49239 / DSM 5036 / JCM 8891 / ACAM 34).